The chain runs to 925 residues: MRNLKLFERFKSTQVHAFTTQDSPSTSSNGSPRMMKFLGHPKSKSRSLLPHGFPTTDLLEPPLDSYLKPIDLVESLSNLYRRIESSSESEASMLYLEQYAVLRSLGDAKLLRRCLLNARRHAIDVPCKVVFSAWLRFFRREHELVGVESMDCNGLASECPKTSLTHGCDLNVDDEGCECSTVCEDEFGSDDVKISKADEFSGLDEVSDISFCVGSEKAKCVRSRIAALSRPFEAMLYGSFVESTTSEIDFSENGISIEAMLALNIYSRIKRVDLFRVETVFELLQLASKFCCDDLKSECEARLAASVTDLDKALTFVEYALEERTTLLLSACLQVFLRELPQSLHNPKVMRFFCSSEAKEQLAFLGSECVFLLYYFLSQVGMEEKLTTDTMLILLERTREFARTNWQKALSLHQMGCVLFERKDYKAAQFHFRLASSLGHVYSLAGVSRTEYKQGKRYSAYRLMNFLISNHKPHGWMYQERSLYNVGVEKLKDLATATELDPTLSFPYKYRAVMKFEQKQIKEAFQEIDRLIQFKLSPECLELRAWLYLATGDRESCLRDLRAVLSLEPNYVVFGGKMRDDLVEALTAQCIEVESEADCWVRLFDRWSAVDDVASLAVVHQMLQNDPSKNFLRFRQSLLLLRLNCQGAAMRCLRMAWNLATSEAERLVYEGWLLYDMGYVEETLTKAEEAISIQRSFEAFFLKAYALADKNLDADEISCVVQVLEEALKCPSDGLRKGQALNNLGSIYINLGMLDQAETAYKNAIEIKHIRARQGLARVYFLKNQRKEACEEMTKLIEKSCSKAAAYEKRSEYCEREKAKEDLDMATTLDPLRTYPYRYRAAVLMDDQRETEAVEELSKAIAFRPELQTLHLRAAFHEATGNLSLATQDCEAALCLDPNHTETLHLYSRSKDQASSIDNTIFGLD.

One can recognise a BTB domain in the interval serine 207 to valine 307. The TPR 1 repeat unit spans residues alanine 409–tyrosine 442. A coiled-coil region spans residues lysine 509–glutamine 533. 6 TPR repeats span residues proline 538–tyrosine 571, alanine 664–phenylalanine 697, glycine 738–arginine 771, arginine 773–lysine 803, threonine 834–leucine 867, and threonine 869–histidine 900.

The protein belongs to the ETO1 family. Interacts with the C-terminal domain of ACS5. Constitutively expressed in green and etiolated seedlings.

It participates in protein modification; protein ubiquitination. Functionally, potential regulator of the ethylene pathway, which acts by regulating the stability of 1-aminocyclopropane-1-carboxylate synthase (ACS) enzymes. May act as a substrate-specific adapter that connects ACS enzymes, such as ACS5, to ubiquitin ligase complexes, leading to proteasomal degradation of ACS enzymes. This chain is ETO1-like protein 2 (EOL2), found in Arabidopsis thaliana (Mouse-ear cress).